A 117-amino-acid chain; its full sequence is MSWRGRSTYYWPRPRRYVEPPEMIGPMRPEQFSDEVEPATPEEGEPATQRQDPAAAQEGEDEGASAGQGPKPEADSQEQGHPQTGCECEDGPDGQEMDPPNPEEVKTPEEGEKQSQC.

The segment at 1–117 is disordered; the sequence is MSWRGRSTYY…PEEGEKQSQC (117 aa). 2 stretches are compositionally biased toward acidic residues: residues 32–45 and 87–96; these read FSDE…EEGE and ECEDGPDGQE. Over residues 103–117 the composition is skewed to basic and acidic residues; sequence EEVKTPEEGEKQSQC.

Belongs to the GAGE family.

The sequence is that of G antigen 13 from Homo sapiens (Human).